The following is a 383-amino-acid chain: MLGKVERSEMYILFAMTQVLLVDKISGITSHTAVAKIRHLTGVKKIGHCGTLDPAACGLLIMGCGTATRLIRYMSNLDKRYIATITLGTQTTTDDSEGEIIYSAPKPSLDKITLESIGRAAEKLSGTIKQIPSAYSAIKVSGNRAYNLARQGIIPKLNAREVRVHWKFLGDFENNQVHVQITCSSGTYVRALARDMGKFLGVGGHLSYLKRLSIGPFHLHEIYREINKKEATMSERTPSGNTQGLTDNMAISDNMAISESDKHDCTEPGINCTELGIKDTCTALREVHYTQGDTLSFTRLTALQALSRIYKPIEVSQKQADDLSCGRYISLGIDSNGPVCAVCKENLIAVIQPVSAGLWRPETVLSDNRKLNSNAAQDASGST.

Residue D53 is the Nucleophile of the active site.

The protein belongs to the pseudouridine synthase TruB family. Type 1 subfamily.

The catalysed reaction is uridine(55) in tRNA = pseudouridine(55) in tRNA. Responsible for synthesis of pseudouridine from uracil-55 in the psi GC loop of transfer RNAs. This chain is tRNA pseudouridine synthase B, found in Tropheryma whipplei (strain TW08/27) (Whipple's bacillus).